Here is a 105-residue protein sequence, read N- to C-terminus: ATP-dependent Clp protease adapter protein ClpS (105 aa).

This sequence belongs to the ClpS family. As to quaternary structure, binds to the N-terminal domain of the chaperone ClpA.

Involved in the modulation of the specificity of the ClpAP-mediated ATP-dependent protein degradation. In Streptomyces avermitilis (strain ATCC 31267 / DSM 46492 / JCM 5070 / NBRC 14893 / NCIMB 12804 / NRRL 8165 / MA-4680), this protein is ATP-dependent Clp protease adapter protein ClpS.